Reading from the N-terminus, the 585-residue chain is MKPHTVSLVLSNLASLAAATCKCTPGHACWPSLEEWSRFNSSIGGQLIQSSPVAEACYSGPKDNAACQNIEKSWTDDVFQVSQPIGYAWPLNLSCPLPTPGLDTKCSIGNSPVYVVNVTCEEDITRGIKFAQEKNLRLVVKSTGHDSQQRSTGYGSLSIWLHNFRKGFRFQGHNPVLATCPKSGWKGSTLTINGGYSWRDIYPAAQKQGLIVIGGLDRGPCSTGGWTQGGGHSPGTHYFGIGADQVLSARVVLASGKIVVASPCENEDLFFAIRGGGGGTFGVVTEITVKTYPTKALSTINLIVGSKGDETVPKFLDAVATIYSLLPGLSKKGFAGYGNWVVRALSPITAKNYTNLYGQSWTLLGATQQEAENLFQPFKEEIVKHQSENGLEVTVSSGTFRDYFSYYYSMGNGTDSAVGGVSALASRLLDTEALQGNRKDLRKFLDSITQGSAVYHTLIHHGLEAAADVKADPTSAVLPGWYKSILLDEFEIPMNTTDVDAYAGSFEYLRNELVPLYESLSPDTGTYMNEADWGNMNWKKDFFGSHWDRLLKVKTRYDPEGFFYCPKCVGSDDWVENKGGSLCRA.

Residues 1–19 (MKPHTVSLVLSNLASLAAA) form the signal peptide. N-linked (GlcNAc...) asparagine glycans are attached at residues Asn-40, Asn-92, and Asn-117. In terms of domain architecture, FAD-binding PCMH-type spans 108–294 (IGNSPVYVVN…TEITVKTYPT (187 aa)). His-145 carries the post-translational modification Pros-8alpha-FAD histidine. Asn-352, Asn-412, and Asn-495 each carry an N-linked (GlcNAc...) asparagine glycan.

It belongs to the oxygen-dependent FAD-linked oxidoreductase family. The cofactor is FAD.

It participates in secondary metabolite biosynthesis. Its function is as follows. FAD-linked oxidoreductase; part of the gene cluster that mediates the biosynthesis of the cyclic tetrapeptide apicidin F (APF). The non-ribosomal peptide synthetase apf1 incorporates four different amino acids to produce apicidin F: L-phenylalanine, D-pipecolic acid (D-pip), N-methoxy-L-tryptophan and L-2-aminooctanedioic acid. L-Phenylalanine is the only proteinogenic amino acid directly used by apf1. The 3 other apf1 substrates are non-proteinogenic and have to be modified by other enzymes of the cluster. Lysine is converted to delta-1-pyrroline-5-carboxylate (P5C) which is reduced to L-pipecolic acid (L-pip) by apf3. L-pip is epimerized to D-pip, probably by apf1 activity, prior to incorporation. L-Tryptophan is N-oxidyzed by one of the cytochrome P450 monooxygenases (apf7 or apf8), and further methylated at the hydroxy group by the O-methyltransferase apf6 to yield N-methoxy-L-tryptophan. The synthesis of the fourth apf1 substrate is more complex. The fatty acid synthase apf5 is involved in the synthesis of the octanoic acid backbone of L-2-aminooctanedioic acid by fixing one acetyl-CoA unit and three malonyl-CoA units. Then one of the cytochrome P450 monooxygenases (apf7 or apf8) may oxidize this backbone to 2-oxooctanoic acid. The aminotransferase apf4 is predicted to catalyze the exchange of the keto group with an amino group. The next step would be the oxidation of 2-aminooctanoic acid by one of the cytochrome P450 monooxygenases (apf7 or apf8). The last step is the oxidation of 2-amino-8-hydroxyoctanoic acid to 2-aminooctanedioic acid is catalyzed by the FAD-dependent monooxygenase apf9. This Gibberella fujikuroi (strain CBS 195.34 / IMI 58289 / NRRL A-6831) (Bakanae and foot rot disease fungus) protein is FAD-linked oxidoreductase apf9.